The chain runs to 379 residues: Lipoyl synthase 1, mitochondrial (379 aa).

The [4Fe-4S] cluster site is built by Cys-106, Cys-111, Cys-117, Cys-137, Cys-141, Cys-144, and Ser-352. The region spanning 122 to 341 is the Radical SAM core domain; sequence EHGTQTATIM…EERGNELGFL (220 aa).

The protein belongs to the radical SAM superfamily. Lipoyl synthase family. Requires [4Fe-4S] cluster as cofactor.

It localises to the mitochondrion. It catalyses the reaction [[Fe-S] cluster scaffold protein carrying a second [4Fe-4S](2+) cluster] + N(6)-octanoyl-L-lysyl-[protein] + 2 oxidized [2Fe-2S]-[ferredoxin] + 2 S-adenosyl-L-methionine + 4 H(+) = [[Fe-S] cluster scaffold protein] + N(6)-[(R)-dihydrolipoyl]-L-lysyl-[protein] + 4 Fe(3+) + 2 hydrogen sulfide + 2 5'-deoxyadenosine + 2 L-methionine + 2 reduced [2Fe-2S]-[ferredoxin]. It participates in protein modification; protein lipoylation via endogenous pathway; protein N(6)-(lipoyl)lysine from octanoyl-[acyl-carrier-protein]: step 2/2. Catalyzes the radical-mediated insertion of two sulfur atoms into the C-6 and C-8 positions of the octanoyl moiety bound to the lipoyl domains of lipoate-dependent enzymes, thereby converting the octanoylated domains into lipoylated derivatives. The polypeptide is Lipoyl synthase 1, mitochondrial (Drosophila yakuba (Fruit fly)).